We begin with the raw amino-acid sequence, 857 residues long: MSDPFEALKAEVDLLGRLLGEAIRKVSGERFFALVEEVRLLSKARRQGDGAAAEVLSQRVERMPVEEMEALVRAFTHYFHLVNLAEERHRVRVNRLRTEGETLENPRPEGFLALAKALKERGLSLEEAEAHLNRLALLLTFTAHPTETRRRTLRHHLERLQEELEGGDRERLLARVVLLYATEEVRKARPSVEDEIKGGLYYLPTTLWRAIPKVVEGLEAALERVYGKRPHLRSPVRFRSWMGGDRDGNPYVTPEVTAFAGRYAREVAKGRYLEELEALVRDLSLSEARIPVPKEVREGGEGVERFPGEPYRRYFAALYRALEGEALSTEGLARALKVAEKGLEGVGLAQVAQAFLRPLEARLSAFGLELAPLDLREESGKLLEAAAELLRLGGVHPDFLALSPEEKEALLTEELKTARPLLPVGEVPQGEALRVALGALRAWGDKGAHVVSMTHHPADLLAVFLLAREVGLYRPGKPLPFDVVPLFETLEDLERAPEVLRRLLANPVFRAHAQGRGGVEVMIGYSDSNKDAGFLMANLALYQAQEALHAVGEAQGIPVFFFHGRGTSTARGGGPAGRAIAGLPPKSVGHRLRLTEQGEALADRYAHPDLAVRHLEQLLYHFAQAALGDGVEPKAHWREALGEAGERSMARYRALLSQEGFFPFFEAFTPIREIGELPIASRPVYRHGRVRDIRDLRAIPWVMAWTQVRLLLPGWYGLSALEGLPMPLLREMYREWPFFATTLESAAMALAKADLGIAERYLKLVPEGLQGFYHHLAEEYRRTVALLEAIFEAPLLHNQKTLERQIALRNPYVDPINFVQVELLARYRAPGGREDEGVRRALLLSLLGVAAGLRNAG.

Residues histidine 144 and lysine 530 contribute to the active site.

It belongs to the PEPCase type 1 family. Homotetramer. Requires Mg(2+) as cofactor. In terms of processing, the N-terminus is blocked.

The catalysed reaction is oxaloacetate + phosphate = phosphoenolpyruvate + hydrogencarbonate. Functionally, forms oxaloacetate, a four-carbon dicarboxylic acid source for the tricarboxylic acid cycle. This is Phosphoenolpyruvate carboxylase (ppc) from Thermus sp. (strain 71).